A 664-amino-acid chain; its full sequence is Peroxisomal acyl-coenzyme A oxidase 1 (664 aa).

10 residues coordinate FAD: Tyr-135, Gln-137, Thr-138, Ser-144, Gly-177, Arg-310, Gln-330, Arg-333, Gly-401, and Thr-422. Glu-424 (proton acceptor) is an active-site residue. Asp-426 contributes to the FAD binding site. Cys-467 and Cys-576 form a disulfide bridge. A Microbody targeting signal motif is present at residues 662–664; the sequence is ARL.

The protein belongs to the acyl-CoA oxidase family. As to quaternary structure, homodimer. FAD is required as a cofactor. As to expression, expressed mainly in flowers and young seedlings. Lower expression in roots, leaves and bracts.

Its subcellular location is the peroxisome. It carries out the reaction a 2,3-saturated acyl-CoA + O2 = a (2E)-enoyl-CoA + H2O2. In terms of biological role, catalyzes the desaturation of both long- and medium-chain acyl-CoAs to 2-trans-enoyl-CoAs. Most active with C14-CoA. Activity on long-chain mono-unsaturated substrates is 40% higher than with the corresponding saturated substrates. Seems to be an important factor in the general metabolism of root tips. May be involved in the biosynthesis of jasmonic acid. The chain is Peroxisomal acyl-coenzyme A oxidase 1 from Arabidopsis thaliana (Mouse-ear cress).